The chain runs to 138 residues: Small ribosomal subunit protein uS9 (138 aa).

Basic and acidic residues predominate over residues 100 to 118 (PENRPPLKTEGYLTRDPRA). The tract at residues 100–138 (PENRPPLKTEGYLTRDPRAKERKKYGLHKARKAPQYSKR) is disordered. A compositionally biased stretch (basic residues) spans 119-138 (KERKKYGLHKARKAPQYSKR).

The protein belongs to the universal ribosomal protein uS9 family.

This Trichormus variabilis (strain ATCC 29413 / PCC 7937) (Anabaena variabilis) protein is Small ribosomal subunit protein uS9.